The following is a 950-amino-acid chain: Calcium-transporting ATPase 1 (950 aa).

N-acetylserine is present on S2. The Cytoplasmic portion of the chain corresponds to S2–F92. A helical membrane pass occupies residues I93–M111. The Lumenal segment spans residues G112 to D116. A helical transmembrane segment spans residues A117–V133. At Q134 to K288 the chain is on the cytoplasmic side. At S227 the chain carries Phosphoserine. A helical transmembrane segment spans residues D289 to G309. At R310–A323 the chain is on the lumenal side. Residues V324–L344 traverse the membrane as a helical segment. The Cytoplasmic segment spans residues R345–R814. Catalysis depends on D371, which acts as the 4-aspartylphosphate intermediate. Residues L815–A835 form a helical membrane-spanning segment. Residues E836–D844 lie on the Lumenal side of the membrane. A helical membrane pass occupies residues T845–A862. Residues C863 to A884 are Cytoplasmic-facing. A helical transmembrane segment spans residues V885–F905. Residues K906 to K909 are Lumenal-facing. A helical membrane pass occupies residues L910–E930. The Cytoplasmic portion of the chain corresponds to L931–V950.

It belongs to the cation transport ATPase (P-type) (TC 3.A.3) family.

The protein localises to the golgi apparatus membrane. The catalysed reaction is Ca(2+)(in) + ATP + H2O = Ca(2+)(out) + ADP + phosphate + H(+). Functionally, this magnesium-dependent enzyme catalyzes the hydrolysis of ATP coupled with the transport of calcium. Has a role in the secretory pathway. This chain is Calcium-transporting ATPase 1 (PMR1), found in Saccharomyces cerevisiae (strain ATCC 204508 / S288c) (Baker's yeast).